Here is a 369-residue protein sequence, read N- to C-terminus: Protein DUF642 L-GALACTONO-1,4-LACTONE-RESPONSIVE GENE 2 (369 aa).

The first 19 residues, 1-19 (MEGVTVVSFFLLFIATAMA), serve as a signal peptide directing secretion. N-linked (GlcNAc...) asparagine glycosylation occurs at Asn-125.

In terms of tissue distribution, expressed in roots, seedlings and leaves.

The protein resides in the secreted. It localises to the cell wall. Its function is as follows. Involved in the regulation of testa rupture during seed germination. Required during roots and rosettes development. This Arabidopsis thaliana (Mouse-ear cress) protein is Protein DUF642 L-GALACTONO-1,4-LACTONE-RESPONSIVE GENE 2.